Here is a 123-residue protein sequence, read N- to C-terminus: Large ribosomal subunit protein bL12 (123 aa).

This sequence belongs to the bacterial ribosomal protein bL12 family. As to quaternary structure, homodimer. Part of the ribosomal stalk of the 50S ribosomal subunit. Forms a multimeric L10(L12)X complex, where L10 forms an elongated spine to which 2 to 4 L12 dimers bind in a sequential fashion. Binds GTP-bound translation factors.

Its function is as follows. Forms part of the ribosomal stalk which helps the ribosome interact with GTP-bound translation factors. Is thus essential for accurate translation. The sequence is that of Large ribosomal subunit protein bL12 from Shewanella amazonensis (strain ATCC BAA-1098 / SB2B).